The primary structure comprises 382 residues: Lipid-A-disaccharide synthase (382 aa).

It belongs to the LpxB family.

The enzyme catalyses a lipid X + a UDP-2-N,3-O-bis[(3R)-3-hydroxyacyl]-alpha-D-glucosamine = a lipid A disaccharide + UDP + H(+). The protein operates within bacterial outer membrane biogenesis; LPS lipid A biosynthesis. In terms of biological role, condensation of UDP-2,3-diacylglucosamine and 2,3-diacylglucosamine-1-phosphate to form lipid A disaccharide, a precursor of lipid A, a phosphorylated glycolipid that anchors the lipopolysaccharide to the outer membrane of the cell. This Koribacter versatilis (strain Ellin345) protein is Lipid-A-disaccharide synthase.